A 311-amino-acid polypeptide reads, in one-letter code: tRNA dimethylallyltransferase (311 aa).

Residue 12 to 19 (GPTASGKT) participates in ATP binding. 14 to 19 (TASGKT) lines the substrate pocket. Interaction with substrate tRNA regions lie at residues 37 to 40 (DSAM) and 161 to 165 (QRIQR).

The protein belongs to the IPP transferase family. Monomer. Mg(2+) is required as a cofactor.

It carries out the reaction adenosine(37) in tRNA + dimethylallyl diphosphate = N(6)-dimethylallyladenosine(37) in tRNA + diphosphate. Catalyzes the transfer of a dimethylallyl group onto the adenine at position 37 in tRNAs that read codons beginning with uridine, leading to the formation of N6-(dimethylallyl)adenosine (i(6)A). This Coxiella burnetii (strain Dugway 5J108-111) protein is tRNA dimethylallyltransferase.